The sequence spans 280 residues: Foldase protein PrsA 4 (280 aa).

The first 21 residues, 1–21 (MKRKKLVIGSILMGMTLSLSA), serve as a signal peptide directing secretion. C22 carries N-palmitoyl cysteine lipidation. C22 is lipidated: S-diacylglycerol cysteine. A PpiC domain is found at 132-222 (KPKLQVSHIL…FGYHIIKLTD (91 aa)).

The protein belongs to the PrsA family.

It is found in the cell membrane. The enzyme catalyses [protein]-peptidylproline (omega=180) = [protein]-peptidylproline (omega=0). Plays a major role in protein secretion by helping the post-translocational extracellular folding of several secreted proteins. The protein is Foldase protein PrsA 4 (prsA4) of Bacillus cereus (strain ATCC 14579 / DSM 31 / CCUG 7414 / JCM 2152 / NBRC 15305 / NCIMB 9373 / NCTC 2599 / NRRL B-3711).